The sequence spans 245 residues: Orotidine 5'-phosphate decarboxylase (245 aa).

Substrate-binding positions include Asp-22, Lys-44, 71–80, Thr-131, Arg-192, Gln-201, Gly-221, and Arg-222; that span reads DLKFHDIPNT. Lys-73 (proton donor) is an active-site residue.

The protein belongs to the OMP decarboxylase family. Type 1 subfamily. Homodimer.

The catalysed reaction is orotidine 5'-phosphate + H(+) = UMP + CO2. It functions in the pathway pyrimidine metabolism; UMP biosynthesis via de novo pathway; UMP from orotate: step 2/2. In terms of biological role, catalyzes the decarboxylation of orotidine 5'-monophosphate (OMP) to uridine 5'-monophosphate (UMP). This is Orotidine 5'-phosphate decarboxylase from Shigella boydii serotype 18 (strain CDC 3083-94 / BS512).